Here is a 322-residue protein sequence, read N- to C-terminus: Formimidoylglutamase (322 aa).

H127, D163, H165, D167, D254, and D256 together coordinate Mn(2+).

It belongs to the arginase family. Requires Mn(2+) as cofactor.

The enzyme catalyses N-formimidoyl-L-glutamate + H2O = formamide + L-glutamate. It participates in amino-acid degradation; L-histidine degradation into L-glutamate; L-glutamate from N-formimidoyl-L-glutamate (hydrolase route): step 1/1. Catalyzes the conversion of N-formimidoyl-L-glutamate to L-glutamate and formamide. This chain is Formimidoylglutamase, found in Paraburkholderia xenovorans (strain LB400).